We begin with the raw amino-acid sequence, 136 residues long: ATP synthase epsilon chain (136 aa).

Residues 106 to 136 (MEGQPSSPEKLKAQQQLNEARARLQASKTAD) are disordered.

Belongs to the ATPase epsilon chain family. As to quaternary structure, F-type ATPases have 2 components, CF(1) - the catalytic core - and CF(0) - the membrane proton channel. CF(1) has five subunits: alpha(3), beta(3), gamma(1), delta(1), epsilon(1). CF(0) has three main subunits: a, b and c.

It is found in the cellular thylakoid membrane. Its function is as follows. Produces ATP from ADP in the presence of a proton gradient across the membrane. This is ATP synthase epsilon chain from Synechococcus sp. (strain CC9605).